Consider the following 105-residue polypeptide: uncharacterized protein (105 aa).

This is an uncharacterized protein from Escherichia coli (strain K12).